A 431-amino-acid polypeptide reads, in one-letter code: Serine hydroxymethyltransferase 2 (431 aa).

Residues Leu-131 and 135–137 (GHL) each bind (6S)-5,6,7,8-tetrahydrofolate. At Lys-240 the chain carries N6-(pyridoxal phosphate)lysine. A (6S)-5,6,7,8-tetrahydrofolate-binding site is contributed by Glu-256.

The protein belongs to the SHMT family. In terms of assembly, homodimer. Pyridoxal 5'-phosphate is required as a cofactor.

It is found in the cytoplasm. The catalysed reaction is (6R)-5,10-methylene-5,6,7,8-tetrahydrofolate + glycine + H2O = (6S)-5,6,7,8-tetrahydrofolate + L-serine. It participates in one-carbon metabolism; tetrahydrofolate interconversion. The protein operates within amino-acid biosynthesis; glycine biosynthesis; glycine from L-serine: step 1/1. Catalyzes the reversible interconversion of serine and glycine with tetrahydrofolate (THF) serving as the one-carbon carrier. This reaction serves as the major source of one-carbon groups required for the biosynthesis of purines, thymidylate, methionine, and other important biomolecules. Also exhibits THF-independent aldolase activity toward beta-hydroxyamino acids, producing glycine and aldehydes, via a retro-aldol mechanism. This chain is Serine hydroxymethyltransferase 2, found in Vibrio vulnificus (strain CMCP6).